Reading from the N-terminus, the 123-residue chain is Protein Wnt-7(I) (123 aa).

Ser-1 carries O-palmitoleoyl serine; by PORCN lipidation. Cys-89 and Cys-104 are joined by a disulfide. Asn-90 is a glycosylation site (N-linked (GlcNAc...) asparagine). The Microbody targeting signal motif lies at 121 to 123 (CKF).

Belongs to the Wnt family. Post-translationally, palmitoleoylation is required for efficient binding to frizzled receptors. Depalmitoleoylation leads to Wnt signaling pathway inhibition.

The protein resides in the secreted. It is found in the extracellular space. The protein localises to the extracellular matrix. Functionally, ligand for members of the frizzled family of seven transmembrane receptors. Probable developmental protein. May be a signaling molecule which affects the development of discrete regions of tissues. Is likely to signal over only few cell diameters. This chain is Protein Wnt-7(I) (WNT-7(I)), found in Eptatretus stoutii (Pacific hagfish).